The primary structure comprises 461 residues: Squalene synthase BSS (461 aa).

NADP(+) is bound by residues arginine 51 and arginine 76. Aspartate 79, glutamate 82, and aspartate 83 together coordinate Mg(2+). NADP(+)-binding residues include arginine 219, lysine 322, and arginine 324. The chain crosses the membrane as a helical span at residues 430–450 (VTQHWWSILIFLISIAVFFIP).

The protein belongs to the phytoene/squalene synthase family. It depends on Mg(2+) as a cofactor.

It localises to the endoplasmic reticulum membrane. The catalysed reaction is 2 (2E,6E)-farnesyl diphosphate + NADPH + H(+) = squalene + 2 diphosphate + NADP(+). It catalyses the reaction 2 (2E,6E)-farnesyl diphosphate + NADH + H(+) = squalene + 2 diphosphate + NAD(+). In terms of biological role, converts farnesyl diphosphate (FPP) into squalene, a precursor for sterol biosynthesis in eukaryotes. Does not possess botryococcene synthase activity. The protein is Squalene synthase BSS of Botryococcus braunii (Green alga).